The sequence spans 118 residues: Large ribosomal subunit protein bL19 (118 aa).

It belongs to the bacterial ribosomal protein bL19 family.

In terms of biological role, this protein is located at the 30S-50S ribosomal subunit interface and may play a role in the structure and function of the aminoacyl-tRNA binding site. The sequence is that of Large ribosomal subunit protein bL19 from Geotalea daltonii (strain DSM 22248 / JCM 15807 / FRC-32) (Geobacter daltonii).